The sequence spans 185 residues: Peptide methionine sulfoxide reductase MsrA (185 aa).

Residue Cys12 is part of the active site.

This sequence belongs to the MsrA Met sulfoxide reductase family.

It catalyses the reaction L-methionyl-[protein] + [thioredoxin]-disulfide + H2O = L-methionyl-(S)-S-oxide-[protein] + [thioredoxin]-dithiol. The catalysed reaction is [thioredoxin]-disulfide + L-methionine + H2O = L-methionine (S)-S-oxide + [thioredoxin]-dithiol. Has an important function as a repair enzyme for proteins that have been inactivated by oxidation. Catalyzes the reversible oxidation-reduction of methionine sulfoxide in proteins to methionine. This Granulibacter bethesdensis (strain ATCC BAA-1260 / CGDNIH1) protein is Peptide methionine sulfoxide reductase MsrA.